A 147-amino-acid chain; its full sequence is MVHLSAEEKGHINAIWSKVSVDQTGAEALGRLLIVYPWTSRFFDHFGDLSSAKGVMGNAKVQGHGAKVLTSFGDAVKNMDNLKGTFAKLSELHCDKLHVDPENFRLLGNILVICLAEHFGKDFTPEVQAAWQKLVAGVATALAHKYH.

V2 is modified (N-acetylvaline). Residues 3 to 147 (HLSAEEKGHI…VATALAHKYH (145 aa)) enclose the Globin domain. Residue K60 is modified to N6-acetyllysine. H64 lines the heme b pocket. Residue K83 is modified to N6-acetyllysine. H93 is a heme b binding site. C94 bears the S-nitrosocysteine mark. Residue K145 is modified to N6-acetyllysine.

It belongs to the globin family. Heterotetramer of two alpha chains and two beta chains. As to expression, red blood cells.

Functionally, involved in oxygen transport from the lung to the various peripheral tissues. This chain is Hemoglobin subunit beta (HBB), found in Sminthopsis crassicaudata (Fat-tailed dunnart).